The following is an 881-amino-acid chain: MNASPVRLLILRRQLATHPAILYSSPYIKSPLVHLHSRMSNVHRSAHANALSFVITRRSISHFPKIISKIIRLPIYVGGGMAAAGSYIAYKMEEASSFTKDKLDRIKDLGESMKEKFNKMFSGDKSQDGGHGNDGTVPTATLIAATSLDDDESKRQGDPKDDDDEDDDDEDDENDSVDTTQDEMLNLTKQMIEIRTILNKVDSSSAHLTLPSIVVIGSQSSGKSSVLESIVGREFLPKGSNMVTRRPIELTLVNTPNSNNVTADFPSMRLYNIKDFKEVKRMLMELNMAVPTSEAVSEEPIQLTIKSSRVPDLSLVDLPGYIQVEAADQPIELKTKIRDLCEKYLTAPNIILAISAADVDLANSSALKASKAADPKGLRTIGVITKLDLVDPEKARSILNNKKYPLSMGYVGVITKTPSSINRKHLGLFGEAPSSSLSGIFSKGQHGQSSGEENTNGLKQIVSHQFEKAYFKENKKYFTNCQVSTKKLREKLIKILEISMSNALEPTSTLIQQELDDTSYLFKVEFNDRHLTPKSYLLNNIDVLKLGIKEFQEKFHRNELKSILRAELDQKVLDVLATRYWKDDNLQDLSSSKLESDTDMLYWHKKLELASSGLTKMGIGRLSTMLTTNAILKELDNILESTQLKNHELIKDLVSNTAINVLNSKYYSTADQVENCIKPFKYEIDLEERDWSLARQHSINLIKEELRQCNSRYQAIKNAVGSKKLANVMGYLENESNLQKETLGMSKLLLERGSEAIFLDKRCKVLSFRLKMLKNKCHSTIEKDRCPEVFLSAVSDKLTSTAVLFLNVELLSDFFYNFPIELDRRLTLLGDEQVEMFAKEDPKISRHIELQKRKELLELALEKIDSILVFKKSYKGVSKNL.

Residues 1-59 (MNASPVRLLILRRQLATHPAILYSSPYIKSPLVHLHSRMSNVHRSAHANALSFVITRRS) constitute a mitochondrion transit peptide. Over 60–72 (ISHFPKIISKIIR) the chain is Mitochondrial matrix. The helical; Signal-anchor for type II membrane protein transmembrane segment at 73 to 92 (LPIYVGGGMAAAGSYIAYKM) threads the bilayer. The Mitochondrial intermembrane portion of the chain corresponds to 93-881 (EEASSFTKDK…KSYKGVSKNL (789 aa)). Positions 145-183 (ATSLDDDESKRQGDPKDDDDEDDDDEDDENDSVDTTQDE) are disordered. Residues 160 to 176 (KDDDDEDDDDEDDENDS) are compositionally biased toward acidic residues. A Dynamin-type G domain is found at 207–505 (HLTLPSIVVI…LEISMSNALE (299 aa)). Residues 217–224 (GSQSSGKS) are G1 motif. Positions 220, 221, 222, 223, 224, 225, and 239 each coordinate GTP. Mg(2+) is bound at residue Ser-224. A G2 motif region spans residues 243 to 245 (VTR). Thr-244 and Asp-317 together coordinate Mg(2+). Residues 317–320 (DLPG) form a G3 motif region. Positions 385–388 (TKLD) are G4 motif. 3 residues coordinate GTP: Lys-386, Asp-388, and Thr-415. The segment at 414–417 (ITKT) is G5 motif. The segment at 668-780 (STADQVENCI…KMLKNKCHST (113 aa)) is paddle region. Cysteines 777 and 786 form a disulfide. Residues 780–872 (TIEKDRCPEV…KIDSILVFKK (93 aa)) enclose the GED domain.

It belongs to the TRAFAC class dynamin-like GTPase superfamily. Dynamin/Fzo/YdjA family. In terms of assembly, oligomeric complex consisting of membrane-bound and soluble forms of MGM1. Associates with FZO1 through interaction with the intermembrane space domain of UGO1 which binds FZO1 through its cytoplasmic domain. Cleavage of the transit peptide by mitochondrial processing protease (MPP) produces a long integral membrane form of MGM1 (l-MGM1). Further processing by the rhomboid protease PCP1 produces a short peripheral membrane form of MGM1 (s-MGM1). Both isoforms are required for full activity.

It localises to the mitochondrion inner membrane. The protein resides in the mitochondrion intermembrane space. The enzyme catalyses GTP + H2O = GDP + phosphate + H(+). Functionally, dynamin-related GTPase that is essential for normal mitochondrial morphology by mediating fusion of the mitochondrial inner membranes, regulating cristae morphology and maintaining respiratory chain function. Exists in two forms: the transmembrane, long form (Dynamin-like GTPase MGM1, long form; L-MGM1), which is tethered to the inner mitochondrial membrane, and the short soluble form (Dynamin-like GTPase MGM1, short form; S-MGM1), which results from proteolytic cleavage and localizes in the intermembrane space. Both forms (L-MGM1 and S-MGM1) cooperate to catalyze the fusion of the mitochondrial inner membrane. The equilibrium between L-MGM1 and S-MGM1 is essential: excess levels of S-MGM1, following loss of mitochondrial membrane potential, lead to an impaired equilibrium between L-MGM1 and S-MGM1, inhibiting mitochondrial fusion. Plays a role in the maintenance and remodeling of mitochondrial cristae, some invaginations of the mitochondrial inner membrane that provide an increase in the surface area. Probably acts by forming helical filaments at the inside of inner membrane tubes with the shape and dimensions of crista junctions. Its function is as follows. Constitutes the transmembrane long form (L-MGM1) that plays a central role in mitochondrial inner membrane fusion and cristae morphology. L-MGM1 and the soluble short form (S-MGM1) form higher-order helical assemblies that coordinate the fusion of mitochondrial inner membranes. Inner membrane-anchored L-MGM1 molecules initiate membrane remodeling by recruiting soluble S-MGM1 to rapidly polymerize into a flexible cylindrical scaffold encaging the mitochondrial inner membrane. Once at the membrane surface, the formation of S-MGM1 helices induce bilayer curvature. MGM1 dimerization through the paddle region, which inserts into cardiolipin-containing membrane, promotes GTP hydrolysis and the helical assembly of a flexible MGM1 lattice on the membrane, which drives membrane curvature and mitochondrial fusion. Constitutes the soluble short form (S-MGM1) generated by cleavage by PCP1, which plays a central role in mitochondrial inner membrane fusion and cristae morphology. The transmembrane long form (L-MGM1) and the S-MGM1 form higher-order helical assemblies that coordinate the fusion of mitochondrial inner membranes. Inner membrane-anchored L-MGM1 molecules initiate membrane remodeling by recruiting soluble S-MGM1 to rapidly polymerize into a flexible cylindrical scaffold encaging the mitochondrial inner membrane. Once at the membrane surface, the formation of S-MGM1 helices induce bilayer curvature. MGM1 dimerization through the paddle region, which inserts into cardiolipin-containing membrane, promotes GTP hydrolysis and the helical assembly of a flexible MGM1 lattice on the membrane, which drives membrane curvature and mitochondrial fusion. Excess levels of S-MGM1 produced by cleavage by PCP1 following stress conditions that induce loss of mitochondrial membrane potential, lead to an impaired equilibrium between L-MGM1 and S-MGM1, thereby inhibiting mitochondrial fusion. The chain is Dynamin-like GTPase MGM1, mitochondrial from Saccharomyces cerevisiae (strain ATCC 204508 / S288c) (Baker's yeast).